We begin with the raw amino-acid sequence, 96 residues long: Conotoxin Mr15.1 (96 aa).

A signal peptide spans 1–20; that stretch reads MSTLKMMLLILLLLLPLATF. Positions 21–57 are excised as a propeptide; sequence DSDGQAIPGGGIPSAVNSRVGRLLGGDEKSGRSLEKR.

The protein belongs to the conotoxin N superfamily. In terms of processing, contains 4 disulfide bonds. As to expression, expressed by the venom duct.

The protein resides in the secreted. The polypeptide is Conotoxin Mr15.1 (Conus marmoreus (Marble cone)).